Reading from the N-terminus, the 76-residue chain is Kappa-actitoxin-Avd4o (76 aa).

The signal sequence occupies residues 1–19 (MNKALFLSLVVLCAAVVFA). The propeptide occupies 20–33 (AEDLQKAKHAPFKL). Cystine bridges form between cysteine 37/cysteine 72, cysteine 39/cysteine 65, and cysteine 55/cysteine 73.

The protein belongs to the sea anemone type 3 (BDS) potassium channel toxin family. In terms of tissue distribution, experimental results show no expression in the ectodermal tissue from the distal and proximal tentacles, body wall, and oral disk. Since paralogs are expressed in this tissue, an expression of this toxin in this tissue is probable. The negative results could be explained by the very low abundance of EST sequences.

It localises to the secreted. Its subcellular location is the nematocyst. In terms of biological role, blocks Kv3 voltage-gated potassium channels. Reduces blood pressure. The sequence is that of Kappa-actitoxin-Avd4o from Anemonia viridis (Snakelocks anemone).